Consider the following 205-residue polypeptide: Dephospho-CoA kinase (205 aa).

In terms of domain architecture, DPCK spans 7–205 (IIGVTGRIAS…QGIINYERFE (199 aa)). An ATP-binding site is contributed by 15-20 (ASGKDT).

The protein belongs to the CoaE family.

It is found in the cytoplasm. It carries out the reaction 3'-dephospho-CoA + ATP = ADP + CoA + H(+). It functions in the pathway cofactor biosynthesis; coenzyme A biosynthesis; CoA from (R)-pantothenate: step 5/5. Its function is as follows. Catalyzes the phosphorylation of the 3'-hydroxyl group of dephosphocoenzyme A to form coenzyme A. This Borreliella burgdorferi (strain ATCC 35210 / DSM 4680 / CIP 102532 / B31) (Borrelia burgdorferi) protein is Dephospho-CoA kinase.